A 110-amino-acid polypeptide reads, in one-letter code: U1-lycotoxin-Ls1cc (110 aa).

The signal sequence occupies residues 1 to 20 (MKFVLLFGVLLVTLFSYSSA). The propeptide occupies 21 to 44 (EMLDDFDQADEDELLSLIEKEEAR). Intrachain disulfides connect Cys47-Cys62, Cys54-Cys71, Cys61-Cys89, and Cys73-Cys87.

This sequence belongs to the neurotoxin 19 (CSTX) family. 03 subfamily. Expressed by the venom gland.

The protein localises to the secreted. The polypeptide is U1-lycotoxin-Ls1cc (Lycosa singoriensis (Wolf spider)).